The primary structure comprises 453 residues: C4-dicarboxylate TRAP transporter large permease protein DctM (453 aa).

13 helical membrane passes run 2–22 (AVALLFILVIGMMIVGVPIAI), 50–70 (AFAGHYTLLAIPFFILASTFM), 82–102 (FAIAMVGWFRGGLAIASVVAC), 104–124 (MFAALSGSSPATVVAIGSIVI), 139–159 (GVICNAGTLGILIPPSIVMVV), 172–192 (FLGGVVPGLLAGLMLIIAIYI), 217–237 (ASWGLLLVVIILGGIYGGIFT), 243–263 (AVAAVYSFFIANFIYRDMGPF), 289–309 (LYDAGKLTIMLMFIIANALIL), 326–346 (MLSAGLGPITFLIVVNLILLV), 356–376 (LLVIVAPLVFPIAIALGIDPI), 380–400 (IMMVVNMEIGMITPPVGLNLF), and 417–437 (ALPWVGVMFLFLIIVTYVPWV).

This sequence belongs to the TRAP transporter large permease family. The complex comprises the extracytoplasmic solute receptor protein DctP, and the two transmembrane proteins DctQ and DctM.

Its subcellular location is the cell inner membrane. Its function is as follows. Part of the tripartite ATP-independent periplasmic (TRAP) transport system DctPQM involved in C4-dicarboxylates uptake. This is C4-dicarboxylate TRAP transporter large permease protein DctM from Vibrio cholerae serotype O1 (strain ATCC 39315 / El Tor Inaba N16961).